The following is an 86-amino-acid chain: Large ribosomal subunit protein bL31 (86 aa).

Residues 64 to 86 (KYGMGSANSSESKDQKEEKDSKK) are disordered. Positions 74-86 (ESKDQKEEKDSKK) are enriched in basic and acidic residues.

The protein belongs to the bacterial ribosomal protein bL31 family. Type A subfamily. Part of the 50S ribosomal subunit.

Binds the 23S rRNA. The sequence is that of Large ribosomal subunit protein bL31 from Prochlorococcus marinus (strain MIT 9301).